Here is a 160-residue protein sequence, read N- to C-terminus: Anaerobic nitrite reductase MHB1 (160 aa).

The Globin domain occupies 8–157 (GFTEEQEALV…LVNAIKSEMK (150 aa)). A Homodimerization motif is present at residues 41 to 45 (EIAPS). 5 residues coordinate heme b: Ser51, Lys65, His69, Lys99, and His104. Positions 111–123 (DEHFEVTKFALLE) match the Homodimerization motif.

It belongs to the plant globin family. Homodimer. Requires heme b as cofactor. Root specific.

The protein resides in the nucleus matrix. It is found in the cytoplasm. The catalysed reaction is Fe(III)-heme b-[protein] + nitric oxide + H2O = Fe(II)-heme b-[protein] + nitrite + 2 H(+). Its function is as follows. Phytoglobin that reduces nitrite to nitric oxide (NO) under anoxic conditions (e.g. during flooding or in waterlogged soil) and upon root nodulation. Required for general plant development and during nodulation, especially for the onset of symbiosis. Monitors nitric oxide (NO) levels during early phase of the nitrogen-fixing symbiosis and buffers oxygen in functioning nodules. May not function as an oxygen storage or transport protein. Has an unusually high affinity for O(2) through a hexacoordinate heme iron because of a very low dissociation constant. The protein is Anaerobic nitrite reductase MHB1 of Medicago sativa (Alfalfa).